A 139-amino-acid chain; its full sequence is Putative pre-16S rRNA nuclease (139 aa).

The protein belongs to the YqgF nuclease family.

The protein localises to the cytoplasm. Its function is as follows. Could be a nuclease involved in processing of the 5'-end of pre-16S rRNA. In Rubrobacter xylanophilus (strain DSM 9941 / JCM 11954 / NBRC 16129 / PRD-1), this protein is Putative pre-16S rRNA nuclease.